The primary structure comprises 406 residues: MSQPITRENFDEWMIPVYAPAPFIPVRGEGSRLWDQQGKEYIDFSGGIAVNALGHAHPELREALNEQASKFWHTGNGYTNEPVLRLAKKLIDATFADRVFFCNSGAEANEAALKLARKFAHDRYGSHKSGIVAFKNAFHGRTLFTVSAGGQPAYSQDFAPLPPDIRHAAYNDINSASALIDDATCAVIVEPIQGEGGVVPASNAFLQGLRELCDRHNALLIFDEVQTGVGRTGELYAYMHYGVTPDLLTTAKALGGGFPVGALLATKECASVMTVGTHGTTYGGNPLASAVAGKVLDLINTPEMLNGVKQRHDWFVERLNSINHHYSLFSEVRGLGLLIGCVLNADYAGQAKQISQEAVKAGVMVLIAGGNVVRFAPALNVSEEEVTTGLDRFSAACEHFVSRGSS.

At Lys252 the chain carries N6-(pyridoxal phosphate)lysine.

It belongs to the class-III pyridoxal-phosphate-dependent aminotransferase family. AstC subfamily. Pyridoxal 5'-phosphate is required as a cofactor.

The enzyme catalyses N(2)-succinyl-L-ornithine + 2-oxoglutarate = N-succinyl-L-glutamate 5-semialdehyde + L-glutamate. It participates in amino-acid degradation; L-arginine degradation via AST pathway; L-glutamate and succinate from L-arginine: step 3/5. Catalyzes the transamination of N(2)-succinylornithine and alpha-ketoglutarate into N(2)-succinylglutamate semialdehyde and glutamate. Can also act as an acetylornithine aminotransferase. This is Succinylornithine transaminase from Escherichia coli O127:H6 (strain E2348/69 / EPEC).